The sequence spans 70 residues: Enhancer of split m6 protein (70 aa).

The sequence is that of Enhancer of split m6 protein from Drosophila melanogaster (Fruit fly).